Here is a 237-residue protein sequence, read N- to C-terminus: Uridylate kinase (237 aa).

Lysine 9–glycine 12 provides a ligand contact to ATP. The tract at residues glycine 17–glycine 22 is involved in allosteric activation by GTP. Residue glycine 51 coordinates UMP. Glycine 52 and arginine 56 together coordinate ATP. UMP contacts are provided by residues aspartate 71 and cysteine 132 to threonine 139. ATP contacts are provided by threonine 159, tyrosine 165, and aspartate 168.

It belongs to the UMP kinase family. Homohexamer.

Its subcellular location is the cytoplasm. It catalyses the reaction UMP + ATP = UDP + ADP. The protein operates within pyrimidine metabolism; CTP biosynthesis via de novo pathway; UDP from UMP (UMPK route): step 1/1. With respect to regulation, allosterically activated by GTP. Inhibited by UTP. Functionally, catalyzes the reversible phosphorylation of UMP to UDP. This is Uridylate kinase from Synechococcus sp. (strain CC9605).